Here is a 742-residue protein sequence, read N- to C-terminus: mRNA export factor ICP27 homolog (742 aa).

Basic and acidic residues predominate over residues 1–11 (MELHSRGRHDA). Residues 1-202 (MELHSRGRHD…NHHGSSAGPQ (202 aa)) form a disordered region. A compositionally biased stretch (basic residues) spans 72–85 (SHHHRPCVPARRPR). Positions 153-171 (KSYDNDDGEPHHHGGDSTH) are enriched in basic and acidic residues. The span at 179 to 202 (CPTTFGSSHPSSANNHHGSSAGPQ) shows a compositional bias: polar residues. Positions 387, 494, 496, and 501 each coordinate Zn(2+). The segment at 387–501 (CILDHQDGWG…QCHECQNEMC (115 aa)) adopts a CHC2-type zinc-finger fold. The segment at 540–742 (ASNHATAGGQ…MLCYSDDMDD (203 aa)) is disordered. Positions 578-587 (YDKKDREGSH) are enriched in basic and acidic residues. Residues 614 to 626 (GELEEDEDSDDAS) are compositionally biased toward acidic residues. Residues 692–703 (QSANGNHSTTAT) show a composition bias toward polar residues.

Belongs to the HHV-1 ICP27 protein family. In terms of assembly, self-associates and forms high-molecular-mass complexes. Interacts with host DDX39A and DDX39B; these interactions are required for UL69 function in mRNA export. Interacts with host SUPT6H, EIF4A1 and PABPC1. In terms of processing, phosphorylated by UL97 and host CDK1, CDK7 and CD9. Phosphorylation by CDKs impacts on UL69 nuclear localization and activity.

It is found in the virion tegument. It localises to the virion. The protein resides in the host nucleus. The protein localises to the host cytoplasm. In terms of biological role, immediate early (EI) protein that plays many roles during productive infection including regulation of host cell cycle progression, regulation of viral gene expression or nuclear export of intronless viral RNAs. Acts as a transcriptional transactivator via interaction with the cellular transcription elongation factor SUPT6H and as a nuclear RNA export factor via interaction with UAP56, a component of the cellular mRNA export machinery. The sequence is that of mRNA export factor ICP27 homolog from Human cytomegalovirus (strain Merlin) (HHV-5).